A 68-amino-acid polypeptide reads, in one-letter code: Conotoxin Vx2 (68 aa).

The N-terminal stretch at 1–20 (MMSKLGVLVTICLLLFPLTA) is a signal peptide. Residues 21 to 47 (LPLDGDQPADHPAKRTQDHNLASPISA) constitute a propeptide that is removed on maturation. 3 disulfide bridges follow: C55/C68, C56/C61, and C57/C65.

This sequence belongs to the conotoxin M superfamily. As to expression, expressed by the venom duct.

The protein resides in the secreted. Functionally, in vivo, elicits a series of symptoms, such as being sedative, tail stiffening and twisted jumping, when injected intracranially into mice. The polypeptide is Conotoxin Vx2 (Conus vexillum (Flag cone)).